Reading from the N-terminus, the 166-residue chain is Ribonuclease H (166 aa).

Residues 5 to 147 (PRKRVALFTD…VDREARRQAQ (143 aa)) enclose the RNase H type-1 domain. Residues D14, E52, D74, and D139 each contribute to the Mg(2+) site. The tract at residues 128–166 (GHTGHPENERVDREARRQAQSQAKTPCPPRAPTLFHEEA) is disordered. Residues 131–144 (GHPENERVDREARR) are compositionally biased toward basic and acidic residues.

It belongs to the RNase H family. As to quaternary structure, monomer. The cofactor is Mg(2+).

It catalyses the reaction Endonucleolytic cleavage to 5'-phosphomonoester.. Functionally, endonuclease that specifically degrades the RNA of RNA-DNA hybrids. This chain is Ribonuclease H (rnhA), found in Thermus thermophilus (strain ATCC 27634 / DSM 579 / HB8).